The chain runs to 258 residues: Small ribosomal subunit protein mS40 (258 aa).

A mitochondrion-targeting transit peptide spans 1 to 35; the sequence is MAASILNVLLRRLPGVSPFRGAYGVQVLLQTLCTK. At Ser49 the chain carries Phosphoserine. Residues 223–258 form a disordered region; the sequence is RLREESGPPPELMPEVPLTAPAEASSTEPGAPQSAL.

It belongs to the bacterial ribosomal protein bS18 family. Mitochondrion-specific ribosomal protein mS40 subfamily. As to quaternary structure, component of the mitochondrial ribosome small subunit (28S) which comprises a 12S rRNA and about 30 distinct proteins.

The protein resides in the mitochondrion. This chain is Small ribosomal subunit protein mS40 (MRPS18B), found in Sus scrofa (Pig).